The sequence spans 201 residues: 3-isopropylmalate dehydratase small subunit (201 aa).

Belongs to the LeuD family. LeuD type 1 subfamily. In terms of assembly, heterodimer of LeuC and LeuD.

The enzyme catalyses (2R,3S)-3-isopropylmalate = (2S)-2-isopropylmalate. Its pathway is amino-acid biosynthesis; L-leucine biosynthesis; L-leucine from 3-methyl-2-oxobutanoate: step 2/4. Functionally, catalyzes the isomerization between 2-isopropylmalate and 3-isopropylmalate, via the formation of 2-isopropylmaleate. This chain is 3-isopropylmalate dehydratase small subunit, found in Cronobacter sakazakii (strain ATCC BAA-894) (Enterobacter sakazakii).